A 154-amino-acid chain; its full sequence is Protein X (154 aa).

A mitochondrial targeting sequence region spans residues 68–117; the sequence is PCALRFTSARYMETAMNTSHHLPRQLYKWTLGLFVMSTTGVEKYFKDCVF.

It belongs to the orthohepadnavirus protein X family. As to quaternary structure, may form homodimer. May interact with host CEBPA, CFLAR, CREB1, DDB1, E4F1, HBXIP, HSPD1/HSP60, NFKBIA, POLR2E and SMAD4. Interacts with host SMC5-SMC6 complex and induces its degradation. Interacts with host TRPC4AP; leading to prevent ubiquitination of TRPC4AP. Interacts with host PLSCR1; this interaction promotes ubiquitination and degradation of HBx and impairs HBx-mediated cell proliferation. In terms of processing, a fraction may be phosphorylated in insect cells and HepG2 cells, a human hepatoblastoma cell line. Phosphorylated in vitro by host protein kinase C or mitogen-activated protein kinase. N-acetylated in insect cells.

It localises to the host cytoplasm. The protein resides in the host nucleus. It is found in the host mitochondrion. Functionally, multifunctional protein that plays a role in silencing host antiviral defenses and promoting viral transcription. Does not seem to be essential for HBV infection. May be directly involved in development of cirrhosis and liver cancer (hepatocellular carcinoma). Most of cytosolic activities involve modulation of cytosolic calcium. The effect on apoptosis is controversial depending on the cell types in which the studies have been conducted. May induce apoptosis by localizing in mitochondria and causing loss of mitochondrial membrane potential. May also modulate apoptosis by binding host CFLAR, a key regulator of the death-inducing signaling complex (DISC). Promotes viral transcription by using the host E3 ubiquitin ligase DDB1 to target the SMC5-SMC6 complex to proteasomal degradation. This host complex would otherwise bind to viral episomal DNA, and prevents its transcription. Moderately stimulates transcription of many different viral and cellular transcription elements. Promoters and enhancers stimulated by HBx contain DNA binding sites for NF-kappa-B, AP-1, AP-2, c-EBP, ATF/CREB, or the calcium-activated factor NF-AT. The polypeptide is Protein X (Hepatitis B virus genotype G (isolate IG29227/2000) (HBV-G)).